A 228-amino-acid polypeptide reads, in one-letter code: uncharacterized protein (228 aa).

The signal sequence occupies residues 1-23 (MIRHTRLLLASLCLIATGARASA).

This is an uncharacterized protein from Methylorubrum extorquens (strain ATCC 14718 / DSM 1338 / JCM 2805 / NCIMB 9133 / AM1) (Methylobacterium extorquens).